A 229-amino-acid polypeptide reads, in one-letter code: Putative N-acetylmannosamine-6-phosphate 2-epimerase (229 aa).

The protein belongs to the NanE family.

The catalysed reaction is an N-acyl-D-glucosamine 6-phosphate = an N-acyl-D-mannosamine 6-phosphate. It participates in amino-sugar metabolism; N-acetylneuraminate degradation; D-fructose 6-phosphate from N-acetylneuraminate: step 3/5. Its function is as follows. Converts N-acetylmannosamine-6-phosphate (ManNAc-6-P) to N-acetylglucosamine-6-phosphate (GlcNAc-6-P). The sequence is that of Putative N-acetylmannosamine-6-phosphate 2-epimerase from Escherichia coli O157:H7.